The primary structure comprises 382 residues: Lipid-A-disaccharide synthase (382 aa).

This sequence belongs to the LpxB family.

The catalysed reaction is 2-N,3-O-bis[(3R)-3-hydroxytetradecanoyl]-alpha-D-glucosaminyl 1-phosphate + UDP-2-N,3-O-bis[(3R)-3-hydroxytetradecanoyl]-alpha-D-glucosamine = lipid A disaccharide (E. coli) + UDP + H(+). The enzyme catalyses a lipid X + a UDP-2-N,3-O-bis[(3R)-3-hydroxyacyl]-alpha-D-glucosamine = a lipid A disaccharide + UDP + H(+). The protein operates within glycolipid biosynthesis; lipid IV(A) biosynthesis; lipid IV(A) from (3R)-3-hydroxytetradecanoyl-[acyl-carrier-protein] and UDP-N-acetyl-alpha-D-glucosamine: step 5/6. Condensation of UDP-2,3-diacylglucosamine and 2,3-diacylglucosamine-1-phosphate to form lipid A disaccharide, a precursor of lipid A, a phosphorylated glycolipid that anchors the lipopolysaccharide to the outer membrane of the cell. The protein is Lipid-A-disaccharide synthase of Serratia proteamaculans (strain 568).